Reading from the N-terminus, the 380-residue chain is Erythronate-4-phosphate dehydrogenase (380 aa).

S45 and T66 together coordinate substrate. NAD(+) contacts are provided by residues 126-127, D146, T175, 206-208, and D232; these read QV and ASR. R208 is an active-site residue. The active site involves E237. Residue H254 is the Proton donor of the active site. G257 serves as a coordination point for NAD(+). Substrate is bound at residue Y258.

The protein belongs to the D-isomer specific 2-hydroxyacid dehydrogenase family. PdxB subfamily. Homodimer.

The protein localises to the cytoplasm. The enzyme catalyses 4-phospho-D-erythronate + NAD(+) = (R)-3-hydroxy-2-oxo-4-phosphooxybutanoate + NADH + H(+). It participates in cofactor biosynthesis; pyridoxine 5'-phosphate biosynthesis; pyridoxine 5'-phosphate from D-erythrose 4-phosphate: step 2/5. Its function is as follows. Catalyzes the oxidation of erythronate-4-phosphate to 3-hydroxy-2-oxo-4-phosphonooxybutanoate. The chain is Erythronate-4-phosphate dehydrogenase from Pseudomonas aeruginosa (strain UCBPP-PA14).